The sequence spans 346 residues: NADH-ubiquinone oxidoreductase chain 2 (346 aa).

Helical transmembrane passes span M1–I21, H25–S45, F60–A80, C95–F115, L124–M144, L149–G169, I178–V195, L200–L219, A242–P262, E274–L294, and A326–V346.

Belongs to the complex I subunit 2 family.

It localises to the mitochondrion inner membrane. It catalyses the reaction a ubiquinone + NADH + 5 H(+)(in) = a ubiquinol + NAD(+) + 4 H(+)(out). Its function is as follows. Core subunit of the mitochondrial membrane respiratory chain NADH dehydrogenase (Complex I) that is believed to belong to the minimal assembly required for catalysis. Complex I functions in the transfer of electrons from NADH to the respiratory chain. The immediate electron acceptor for the enzyme is believed to be ubiquinone. The sequence is that of NADH-ubiquinone oxidoreductase chain 2 (MT-ND2) from Mareca penelope (Eurasian wigeon).